Consider the following 416-residue polypeptide: Probable glucan 1,3-beta-glucosidase A (416 aa).

Positions Met-1–Ala-21 are cleaved as a signal peptide. The active-site Proton donor is the Glu-209. Cystine bridges form between Cys-290-Cys-415 and Cys-316-Cys-341. Residue Glu-308 is the Nucleophile of the active site.

The protein belongs to the glycosyl hydrolase 5 (cellulase A) family. In terms of assembly, monomer. Mn(2+) serves as cofactor.

It is found in the secreted. The catalysed reaction is Successive hydrolysis of beta-D-glucose units from the non-reducing ends of (1-&gt;3)-beta-D-glucans, releasing alpha-glucose.. Beta-glucanases participate in the metabolism of beta-glucan, the main structural component of the cell wall. It could also function biosynthetically as a transglycosylase. This chain is Probable glucan 1,3-beta-glucosidase A (exgA), found in Aspergillus terreus (strain NIH 2624 / FGSC A1156).